We begin with the raw amino-acid sequence, 590 residues long: Nuclear receptor subfamily 2 group C member 1 (590 aa).

Residues 1 to 166 (MATIEEIAHQ…RLQRCIAFGM (166 aa)) form a required for interaction with KAT2B region. Positions 98–173 (FDLCVVCGDK…FGMKQDSVQC (76 aa)) form a DNA-binding region, nuclear receptor. 2 NR C4-type zinc fingers span residues 101–121 (CVVC…CEGC) and 137–156 (CRGS…CQYC). Residues Ser-185 and Ser-203 each carry the phosphoserine modification. Thr-208 carries the post-translational modification Phosphothreonine. Thr-210 carries the phosphothreonine; by MAPK1 modification. A Glycyl lysine isopeptide (Lys-Gly) (interchain with G-Cter in SUMO); alternate cross-link involves residue Lys-238. Lys-238 is covalently cross-linked (Glycyl lysine isopeptide (Lys-Gly) (interchain with G-Cter in SUMO2); alternate). The NR LBD domain occupies 333 to 577 (EGMEGSPHLI…SVIPHILKME (245 aa)). Ser-461 and Ser-568 each carry phosphoserine; by PKC. A required for interaction with NRIP1 region spans residues 571–590 (PHILKMEPADYNSQIIGHSL). Residue Lys-575 forms a Glycyl lysine isopeptide (Lys-Gly) (interchain with G-Cter in SUMO2) linkage.

Belongs to the nuclear hormone receptor family. NR2 subfamily. As to quaternary structure, homodimer. Heterodimer; with NR2C2 which is required for chromatin remodeling and for binding to promoter regions such as globin DR1 repeats. Interacts with ESR1; the interaction prevents homodimerization of ESR1 and suppresses its transcriptional activity and cell growth. Interacts with NRIP1 (via its LXXLL motifs); the interaction provides corepressor activity. Interacts with HDAC3 (via the DNA-binding domain); the interaction recruits phosphorylated NR2C1 to PML bodies for sumoylation. Interacts with HDAC4 (via the DNA-binding domain). Interacts with PIAS1; the interaction is required for sumoylation of NR2C1. Interacts with UBE2I; the interaction is required for sumoylation of NR2C1. Interacts with KAT2B; the interaction acts as a corepressor of gene expression. Sumoylation requires both PIAS1 and UBE2I. Sumoylation appears to dissociate NR2C1 from the PML nuclear bodies. Enhances the interaction with NRIP1 but inhibits interaction with KAT2B. In proliferating cells, stimulation by all-trans retinoic acid, activation of MAPK1-mediated phosphorylation and recruitment to PML bodies with subsequent sumoylation, suppresses OCT4 expression. In terms of processing, phosphorylated on several serine and threonine residues. Phosphorylation on Thr-210, stimulated by all-trans retinoic acid (atRA) mediates PML location and sumoylation in proliferating cells which then modulates its association with effector molecules, KAT2B and NRIP1. Phosphorylation on Ser-568 by PKC is important for protein stability and function as activator of RARB. In terms of tissue distribution, isoform 1 is highly expressed in the adlumenal compartment of the seminiferous tubule of adult testes (at protein level) and in the eyes of newborn animals. Weakly expressed in other adult organs including the seminal vesicle, prostate, ovary, adrenal gland, heart, thymus, placenta and brain. Expressed during embryonic stages in developing eyes, brain and cartilage primordia (at protein level). Also expressed in the developing spinal motor neurons and in the sympathetic-, parasympathetic- and sensory ganglia of the embryonic PNS. Expressed in the developing neural epithelia of the inner ear, nasal cavity, tongue and retina. At day 16.5, expressed in various tissues including kidney and intestine. In contrast, isoform 2 is widely expressed at a low level throughout the adult testis.

The protein localises to the nucleus. It localises to the PML body. Its function is as follows. Orphan nuclear receptor. Binds the IR7 element in the promoter of its own gene in an autoregulatory negative feedback mechanism. Primarily repressor of a broad range of genes including ESR1 and RARB. Together with NR2C2, forms the core of the DRED (direct repeat erythroid-definitive) complex that represses embryonic and fetal globin transcription. Binds to hormone response elements (HREs) consisting of two 5'-AGGTCA-3' half site direct repeat consensus sequences. Also activator of OCT4 gene expression. Plays a fundamental role in early embryogenesis and regulates embryonic stem cell proliferation and differentiation. Mediator of retinoic acid-regulated preadipocyte proliferation. The protein is Nuclear receptor subfamily 2 group C member 1 of Mus musculus (Mouse).